The primary structure comprises 77 residues: Putative neurotoxin 1 (77 aa).

A signal peptide spans 1 to 25; that stretch reads MKAFIAILSIAIVLLLIVSIKETSA. Positions 26-46 are excised as a propeptide; sequence KDCKQECVKRYTKGDLTNFLK.

It belongs to the scolopendra neurotoxin 3 family. In terms of processing, contains 2 disulfide bonds. As to expression, expressed by the venom gland.

It is found in the secreted. The protein is Putative neurotoxin 1 of Scolopendra mutilans (Chinese red-headed centipede).